Here is a 265-residue protein sequence, read N- to C-terminus: MKKEVCSLAFFKAVFAEFLATLIFVFFGLGSALKWPSALPTILQISIAFGLAIGTLAQALGPVSGGHINPAITLALLIGNQISLLRAVFYVAAQLVGAIAGAGILYWLAPLNARGNLAVNALNNNTTPGKAMVVELILTFQLALCIFSSTDSRRTSPVGSPALSIGLSVTLGHLVGIYFTGCSMNPARSFGPAVVMNRFSPSHWVFWVGPIVGAMLAAILYFYLLFPSSLSLHDRVAVVKGTYEPEEDWEDHREERKKTIELTAH.

Topologically, residues 1-12 (MKKEVCSLAFFK) are cytoplasmic. Residues 13–33 (AVFAEFLATLIFVFFGLGSAL) form a helical membrane-spanning segment. The Extracellular portion of the chain corresponds to 34–39 (KWPSAL). Residues 40–60 (PTILQISIAFGLAIGTLAQAL) traverse the membrane as a helical segment. The Cytoplasmic portion of the chain corresponds to 61–65 (GPVSG). Positions 66–74 (GHINPAITL) form an intramembrane region, discontinuously helical. Residues 69 to 71 (NPA) carry the NPA 1 motif. Residues 75-87 (ALLIGNQISLLRA) lie on the Cytoplasmic side of the membrane. A helical membrane pass occupies residues 88–108 (VFYVAAQLVGAIAGAGILYWL). Topologically, residues 109–126 (APLNARGNLAVNALNNNT) are extracellular. N-linked (GlcNAc...) asparagine glycosylation is present at Asn-124. Residues 127 to 147 (TPGKAMVVELILTFQLALCIF) form a helical membrane-spanning segment. At 148-158 (SSTDSRRTSPV) the chain is on the cytoplasmic side. Residues 159–179 (GSPALSIGLSVTLGHLVGIYF) traverse the membrane as a helical segment. Thr-180 is a topological domain (extracellular). Positions 181–191 (GCSMNPARSFG) form an intramembrane region, discontinuously helical. The NPA 2 signature appears at 185–187 (NPA). At 192-203 (PAVVMNRFSPSH) the chain is on the extracellular side. The helical transmembrane segment at 204-224 (WVFWVGPIVGAMLAAILYFYL) threads the bilayer. Residues 225–265 (LFPSSLSLHDRVAVVKGTYEPEEDWEDHREERKKTIELTAH) are Cytoplasmic-facing.

Belongs to the MIP/aquaporin (TC 1.A.8) family. As to quaternary structure, homotetramer; each monomer provides an independent water pore. Interacts with TRPV4; the interaction is probably indirect and regulates TRPV4 activation by hypotonicity. As to expression, salivary glands, lacrimal glands, corneal epithelium in eye, trachea and lung.

It localises to the apical cell membrane. It is found in the cell membrane. Its subcellular location is the cytoplasmic vesicle membrane. It catalyses the reaction H2O(in) = H2O(out). Its function is as follows. Aquaporins form homotetrameric transmembrane channels, with each monomer independently mediating water transport across the plasma membrane along its osmotic gradient. Plays an important role in fluid secretion in salivary glands. Required for TRPV4 activation by hypotonicity. Together with TRPV4, controls regulatory volume decrease in salivary epithelial cells. Seems to play a redundant role in water transport in the eye, lung and in sweat glands. The chain is Aquaporin-5 from Rattus norvegicus (Rat).